Consider the following 101-residue polypeptide: Small ribosomal subunit protein uS14 (101 aa).

Belongs to the universal ribosomal protein uS14 family. As to quaternary structure, part of the 30S ribosomal subunit. Contacts proteins S3 and S10.

Functionally, binds 16S rRNA, required for the assembly of 30S particles and may also be responsible for determining the conformation of the 16S rRNA at the A site. The polypeptide is Small ribosomal subunit protein uS14 (Haemophilus ducreyi (strain 35000HP / ATCC 700724)).